The chain runs to 195 residues: Pyridoxal 5'-phosphate synthase subunit PdxT (195 aa).

Position 55-57 (55-57 (GES)) interacts with L-glutamine. Cys-84 serves as the catalytic Nucleophile. Residues Arg-111 and 139 to 140 (IR) each bind L-glutamine. Catalysis depends on charge relay system residues His-175 and Glu-177.

This sequence belongs to the glutaminase PdxT/SNO family. As to quaternary structure, in the presence of PdxS, forms a dodecamer of heterodimers. Only shows activity in the heterodimer.

It carries out the reaction aldehydo-D-ribose 5-phosphate + D-glyceraldehyde 3-phosphate + L-glutamine = pyridoxal 5'-phosphate + L-glutamate + phosphate + 3 H2O + H(+). It catalyses the reaction L-glutamine + H2O = L-glutamate + NH4(+). It functions in the pathway cofactor biosynthesis; pyridoxal 5'-phosphate biosynthesis. Catalyzes the hydrolysis of glutamine to glutamate and ammonia as part of the biosynthesis of pyridoxal 5'-phosphate. The resulting ammonia molecule is channeled to the active site of PdxS. This chain is Pyridoxal 5'-phosphate synthase subunit PdxT, found in Methanosphaerula palustris (strain ATCC BAA-1556 / DSM 19958 / E1-9c).